The sequence spans 166 residues: Cold-inducible RNA-binding protein (166 aa).

One can recognise an RRM domain in the interval 6–84 (GKLFVGGLNF…RQIRVDQAGK (79 aa)). The segment at 68 to 166 (NGKSVDGRQI…DSYDSYTTQE (99 aa)) is disordered. Gly residues predominate over residues 93–120 (YRGGSSGGRGFFRGGRGRGGGGDRGYGG). Over residues 121–166 (SSRFENRSGGYQSSGSRDYYGRSHGSYGDRSGGSYRDSYDSYTTQE) the composition is skewed to low complexity.

Interacts with prmt1. Interacts with elavl1/elrA (via RRM3). Associates with ribosomes. Post-translationally, methylated on arginine residues within RGG motifs. Methylation by prmt1 promotes cytoplasmic accumulation.

The protein localises to the nucleus. Its subcellular location is the nucleoplasm. The protein resides in the cytoplasm. Cold-inducible mRNA binding protein. Acts cooperatively with elavl1/elrA to stabilize AU-rich element (ARE)-containing mRNAs by binding to themm and inhibiting their deadenylation. Essential for embryonic gastrulation and neural development, acting to maintain the expression of a set of adhesion molecules, and cell movement during embryogenesis. Required for pronephros development. The sequence is that of Cold-inducible RNA-binding protein from Xenopus tropicalis (Western clawed frog).